We begin with the raw amino-acid sequence, 140 residues long: Interleukin-4 (140 aa).

The N-terminal stretch at Met-1–Ser-20 is a signal peptide. Intrachain disulfides connect Cys-25-Cys-107, Cys-47-Cys-87, and Cys-69-Cys-114. Residues Asn-61, Asn-91, and Asn-117 are each glycosylated (N-linked (GlcNAc...) asparagine).

The protein belongs to the IL-4/IL-13 family. As to quaternary structure, interacts with IL4R. Interacts with IL13RA1.

The protein resides in the secreted. Its function is as follows. Cytokine secreted primarily by mast cells, T-cells, eosinophils, and basophils that plays a role in regulating antibody production, hematopoiesis and inflammation, and the development of effector T-cell responses. Induces the expression of class II MHC molecules on resting B-cells. Enhances both secretion and cell surface expression of IgE and IgG1. Also regulates the expression of the low affinity Fc receptor for IgE (CD23) on both lymphocytes and monocytes. Positively regulates IL31RA expression in macrophages. Stimulates autophagy in dendritic cells by interfering with mTORC1 signaling and through the induction of RUFY4. In addition, plays a critical role in higher functions of the normal brain, such as memory and learning. Upon binding to IL4, IL4R receptor dimerizes either with the common IL2R gamma chain/IL2RG to produce the type 1 signaling complex, located mainly on hematopoietic cells, or with the IL13RA1 to produce the type 2 complex, which is also expressed on nonhematopoietic cells. Engagement of both types of receptors initiates JAK3 and to a lower extend JAK1 phosphorylation leading to activation of the signal transducer and activator of transcription 6/STAT6. The sequence is that of Interleukin-4 (Il4) from Mus musculus (Mouse).